A 144-amino-acid chain; its full sequence is Large ribosomal subunit protein uL15 (144 aa).

Basic residues predominate over residues 1 to 14; that stretch reads MVVRREKKSRKMRG. Positions 1 to 35 are disordered; sequence MVVRREKKSRKMRGSRTMGWGIRGQHRDRGSQGGR.

It belongs to the universal ribosomal protein uL15 family. In terms of assembly, part of the 50S ribosomal subunit.

Functionally, binds to the 23S rRNA. The polypeptide is Large ribosomal subunit protein uL15 (Saccharolobus solfataricus (strain ATCC 35092 / DSM 1617 / JCM 11322 / P2) (Sulfolobus solfataricus)).